The chain runs to 2318 residues: Neurogenic locus notch homolog protein 3 (2318 aa).

The span at 1–14 (MGLGARGRRRRRRL) shows a compositional bias: basic residues. Residues 1-20 (MGLGARGRRRRRRLMALPPP) form a disordered region. Positions 1-39 (MGLGARGRRRRRRLMALPPPPPPMRALPLLLLLAGLGAA) are cleaved as a signal peptide. EGF-like domains are found at residues 40–78 (APPC…ERCQ), 79–119 (LEDP…PDCS), and 120–157 (QPDP…QSCQ). The Extracellular portion of the chain corresponds to 40–1643 (APPCLDGSPC…PLEAPEQSVP (1604 aa)). Intrachain disulfides connect Cys-43–Cys-55, Cys-49–Cys-66, Cys-68–Cys-77, Cys-83–Cys-94, Cys-88–Cys-107, Cys-109–Cys-118, Cys-124–Cys-135, Cys-129–Cys-145, Cys-147–Cys-156, Cys-163–Cys-175, Cys-169–Cys-184, Cys-186–Cys-195, Cys-202–Cys-213, Cys-207–Cys-223, Cys-225–Cys-234, Cys-241–Cys-252, Cys-246–Cys-261, Cys-263–Cys-272, Cys-279–Cys-292, Cys-286–Cys-301, Cys-303–Cys-312, Cys-319–Cys-330, Cys-324–Cys-339, Cys-341–Cys-350, Cys-356–Cys-367, Cys-361–Cys-378, Cys-380–Cys-389, Cys-396–Cys-409, Cys-403–Cys-418, Cys-420–Cys-429, Cys-436–Cys-447, Cys-441–Cys-456, Cys-458–Cys-467, Cys-474–Cys-485, Cys-479–Cys-494, Cys-496–Cys-505, Cys-512–Cys-523, Cys-517–Cys-532, Cys-534–Cys-543, Cys-550–Cys-560, Cys-555–Cys-569, Cys-571–Cys-580, Cys-587–Cys-598, Cys-592–Cys-607, Cys-609–Cys-618, Cys-625–Cys-635, Cys-630–Cys-644, Cys-646–Cys-655, Cys-662–Cys-673, Cys-667–Cys-682, Cys-684–Cys-693, Cys-700–Cys-710, Cys-705–Cys-719, Cys-721–Cys-730, Cys-739–Cys-750, Cys-744–Cys-759, Cys-761–Cys-770, Cys-776–Cys-787, Cys-781–Cys-797, Cys-799–Cys-808, Cys-815–Cys-827, Cys-821–Cys-836, Cys-838–Cys-847, Cys-854–Cys-865, Cys-859–Cys-874, Cys-876–Cys-885, Cys-892–Cys-902, Cys-897–Cys-911, Cys-913–Cys-922, Cys-929–Cys-940, Cys-934–Cys-949, Cys-951–Cys-960, Cys-967–Cys-978, Cys-972–Cys-987, Cys-989–Cys-998, Cys-1005–Cys-1016, Cys-1010–Cys-1023, Cys-1025–Cys-1034, Cys-1041–Cys-1062, Cys-1056–Cys-1071, Cys-1073–Cys-1082, Cys-1089–Cys-1100, Cys-1094–Cys-1109, Cys-1111–Cys-1120, Cys-1127–Cys-1138, Cys-1132–Cys-1147, Cys-1149–Cys-1158, Cys-1165–Cys-1183, Cys-1177–Cys-1192, Cys-1194–Cys-1203, Cys-1210–Cys-1223, Cys-1215–Cys-1233, Cys-1235–Cys-1244, Cys-1251–Cys-1262, Cys-1256–Cys-1276, Cys-1278–Cys-1287, Cys-1294–Cys-1305, Cys-1299–Cys-1314, and Cys-1316–Cys-1325. Residues 159–196 (DIDECRSGTTCRHGGTCLNTPGSFRCQCPLGYTGLLCE) enclose the EGF-like 4; calcium-binding domain. Residues 198–235 (PVVPCAPSPCRNGGTCRQSSDVTYDCACLPGFEGQNCE) form the EGF-like 5 domain. The EGF-like 6; calcium-binding domain maps to 237–273 (NVDDCPGHRCLNGGTCVDGVNTYNCQCPPEWTGQFCT). One can recognise an EGF-like 7 domain in the interval 275–313 (DVDECQLQPNACHNGGTCFNLLGGHSCVCVNGWTGESCS). Residues 315–351 (NIDDCATAVCFHGATCHDRVASFYCACPMGKTGLLCH) form the EGF-like 8; calcium-binding domain. An EGF-like 9 domain is found at 352–390 (LDDACVSNPCHEDAICDTNPVSGRAICTCPPGFTGGACD). Residues 392 to 430 (DVDECSIGANPCEHLGRCVNTQGSFLCQCGRGYTGPRCE) enclose the EGF-like 10; calcium-binding domain. One can recognise an EGF-like 11; calcium-binding domain in the interval 432–468 (DVNECLSGPCRNQATCLDRIGQFTCICMAGFTGTYCE). Residues 470–506 (DIDECQSSPCVNGGVCKDRVNGFSCTCPSGFSGSMCQ) form the EGF-like 12; calcium-binding domain. The region spanning 508–544 (DVDECASTPCRNGAKCVDQPDGYECRCAEGFEGTLCE) is the EGF-like 13; calcium-binding domain. Residues 546–581 (NVDDCSPDPCHHGRCVDGIASFSCACAPGYTGIRCE) form the EGF-like 14; calcium-binding domain. One can recognise an EGF-like 15; calcium-binding domain in the interval 583–619 (QVDECRSQPCRYGGKCLDLVDKYLCRCPPGTTGVNCE). Positions 621–656 (NIDDCASNPCTFGVCRDGINRYDCVCQPGFTGPLCN) constitute an EGF-like 16; calcium-binding domain. In terms of domain architecture, EGF-like 17; calcium-binding spans 658–694 (EINECASSPCGEGGSCVDGENGFHCLCPPGSLPPLCL). 3 consecutive EGF-like domains span residues 696–731 (ANHP…PRCS), 735–771 (APDA…HQCE), and 772–809 (VLSP…PRCQ). One can recognise an EGF-like 21; calcium-binding domain in the interval 811–848 (DVDECAGASPCGPHGTCTNLPGNFRCICHRGYTGPFCD). The region spanning 850–886 (DIDDCDPNPCLHGGSCQDGVGSFSCSCLDGFAGPRCA) is the EGF-like 22; calcium-binding domain. The EGF-like 23; calcium-binding domain occupies 888–923 (DVDECLSSPCGPGTCTDHVASFTCACPPGYGGFHCE). EGF-like domains lie at 925–961 (DLPD…THCQ), 963–999 (EADP…SQCQ), 1001–1035 (PVDW…RLCD), 1037–1083 (QSLP…SHCE), and 1085–1121 (EVDP…DSCE). Positions 1123–1159 (NIDECASQPCQNGGSCIDLVARYLCSCPPGTLGVLCE) constitute an EGF-like 29; calcium-binding domain. The 44-residue stretch at 1161–1204 (NEDDCDLGPSLDSGVQCLHNGTCVDLVGGFRCNCPPGYTGLHCE) folds into the EGF-like 30; calcium-binding domain. N-linked (GlcNAc...) asparagine glycosylation is present at Asn-1180. EGF-like domains lie at 1206-1245 (DINE…PRCQ), 1247-1288 (ALSP…LRCE), 1290-1326 (VARS…PSCR), and 1336-1374 (TNAS…PRCE). Asn-1337 is a glycosylation site (N-linked (GlcNAc...) asparagine). 12 cysteine pairs are disulfide-bonded: Cys-1340-Cys-1351, Cys-1345-Cys-1362, Cys-1364-Cys-1373, Cys-1388-Cys-1411, Cys-1393-Cys-1406, Cys-1402-Cys-1418, Cys-1429-Cys-1452, Cys-1434-Cys-1447, Cys-1443-Cys-1459, Cys-1468-Cys-1494, Cys-1476-Cys-1489, and Cys-1485-Cys-1501. LNR repeat units lie at residues 1388-1428 (CPRA…PWRQ), 1429-1466 (CEAL…GRDR), and 1468-1506 (CNPV…SEVP). A glycan (N-linked (GlcNAc...) asparagine) is linked at Asn-1439. A helical transmembrane segment spans residues 1644–1664 (LLPLLVAGAVFLLIIFILGVM). At 1665-2318 (VARRKREHST…EVTPKRQVMA (654 aa)) the chain is on the cytoplasmic side. ANK repeat units lie at residues 1839–1868 (TGET…DTNA), 1872–1902 (SGRT…DLDA), 1906–1935 (DGST…DVNA), 1939–1968 (LGKS…NKDM), and 1972–2001 (KEET…NREI). Disordered regions lie at residues 2025–2045 (LDQP…PLLC) and 2058–2126 (QSGT…PLEG). Residues 2028–2045 (PSGPRSPSGPHGLGPLLC) show a composition bias toward low complexity. Position 2174 is an omega-N-methylarginine (Arg-2174). Residues 2184–2193 (SFLLPLAPGP) show a composition bias toward low complexity. A disordered region spans residues 2184–2318 (SFLLPLAPGP…EVTPKRQVMA (135 aa)). Residues 2242–2261 (HPYLTPSPESPEHWASPSPP) are PEST-like. Residues 2262–2282 (SLSDWSDSTPSPATATNATAS) show a composition bias toward low complexity. Residues 2296-2305 (SLPQSQTQLG) show a composition bias toward polar residues.

This sequence belongs to the NOTCH family. As to quaternary structure, interacts with PSMA1. Heterodimer of a C-terminal fragment N(TM) and a N-terminal fragment N(EC) which are probably linked by disulfide bonds. Interacts with MAML1, MAML2 and MAML3 which act as transcriptional coactivators for NOTCH3. Interacts with HIF1AN. Synthesized in the endoplasmic reticulum as an inactive form which is proteolytically cleaved by a furin-like convertase in the trans-Golgi network before it reaches the plasma membrane to yield an active, ligand-accessible form. Cleavage results in a C-terminal fragment N(TM) and a N-terminal fragment N(EC). Following ligand binding, it is cleaved by TNF-alpha converting enzyme (TACE) to yield a membrane-associated intermediate fragment called notch extracellular truncation (NEXT). This fragment is then cleaved by presenilin dependent gamma-secretase to release a notch-derived peptide containing the intracellular domain (NICD) from the membrane. In terms of processing, phosphorylated. Post-translationally, hydroxylated by HIF1AN. As to expression, proliferating neuroepithelium.

The protein localises to the cell membrane. Its subcellular location is the nucleus. Its function is as follows. Functions as a receptor for membrane-bound ligands Jagged1, Jagged2 and Delta1 to regulate cell-fate determination. Upon ligand activation through the released notch intracellular domain (NICD) it forms a transcriptional activator complex with RBPJ/RBPSUH and activates genes of the enhancer of split locus. Affects the implementation of differentiation, proliferation and apoptotic programs. May play a role during CNS development. The sequence is that of Neurogenic locus notch homolog protein 3 (Notch3) from Mus musculus (Mouse).